The following is a 442-amino-acid chain: ATP-dependent protease ATPase subunit HslU (442 aa).

ATP contacts are provided by residues Ile-18, 60–65 (GVGKTE), Asp-255, Glu-320, and Arg-392.

It belongs to the ClpX chaperone family. HslU subfamily. In terms of assembly, a double ring-shaped homohexamer of HslV is capped on each side by a ring-shaped HslU homohexamer. The assembly of the HslU/HslV complex is dependent on binding of ATP.

The protein localises to the cytoplasm. In terms of biological role, ATPase subunit of a proteasome-like degradation complex; this subunit has chaperone activity. The binding of ATP and its subsequent hydrolysis by HslU are essential for unfolding of protein substrates subsequently hydrolyzed by HslV. HslU recognizes the N-terminal part of its protein substrates and unfolds these before they are guided to HslV for hydrolysis. This Hahella chejuensis (strain KCTC 2396) protein is ATP-dependent protease ATPase subunit HslU.